The following is a 199-amino-acid chain: Outer-membrane lipoprotein LolB (199 aa).

Positions 1 to 28 (MAAAGSLCQTAWRVRGWLAAGLCALLAG) are cleaved as a signal peptide. Residue cysteine 29 is the site of N-palmitoyl cysteine attachment. Cysteine 29 carries S-diacylglycerol cysteine lipidation.

Belongs to the LolB family. As to quaternary structure, monomer.

The protein resides in the cell outer membrane. Functionally, plays a critical role in the incorporation of lipoproteins in the outer membrane after they are released by the LolA protein. The protein is Outer-membrane lipoprotein LolB of Bordetella petrii (strain ATCC BAA-461 / DSM 12804 / CCUG 43448).